The chain runs to 574 residues: Man(5)GlcNAc(2)-PP-dolichol translocation protein RFT1 (574 aa).

Topologically, residues 1 to 24 (MAKKNSQLPSTSEQILERSTTGAT) are lumenal. The chain crosses the membrane as a helical span at residues 25–45 (FLMMGQLFTKLVTFILNNLLI). At 46 to 48 (RFL) the chain is on the cytoplasmic side. The helical transmembrane segment at 49-69 (SPRIFGITAFLEFIQGTVLFF) threads the bilayer. At 70 to 110 (SRDAIRLSTLRISDSGNGIIDDDDEEEYQETHYKSKVLQTA) the chain is on the lumenal side. The helical transmembrane segment at 111–131 (VNFAYIPFWIGFPLSIGLIAW) threads the bilayer. Residues 132–148 (QYRNINAYFITLPFFRW) are Cytoplasmic-facing. A helical transmembrane segment spans residues 149–169 (SIFLIWLSIIVELLSEPFFIV). The Lumenal portion of the chain corresponds to 170 to 181 (NQFMLNYAARSR). Residues 182–202 (FESIAVTTGCIVNFIVVYAVQ) traverse the membrane as a helical segment. At 203–218 (QSRYPMGVVTSDIDKE) the chain is on the cytoplasmic side. The chain crosses the membrane as a helical span at residues 219–239 (GIAILAFALGKLAHSITLLAC). Topologically, residues 240-319 (YYWDYLKNFK…INSLCTVEEQ (80 aa)) are lumenal. A helical membrane pass occupies residues 320 to 340 (GIYALLSNYGSLLTRLLFAPI). The Cytoplasmic portion of the chain corresponds to 341–372 (EESLRLFLARLLSSHNPKNLKLSIEVLVNLTR). The helical transmembrane segment at 373 to 393 (FYIYLSLMIIVFGPANSSFLL) threads the bilayer. Residues 394 to 413 (QFLIGSKWSTTSVLDTIRVY) lie on the Lumenal side of the membrane. A helical transmembrane segment spans residues 414–434 (CFYIPFLSLNGIFEAFFQSVA). Topologically, residues 435-443 (TGDQILKHS) are cytoplasmic. The helical transmembrane segment at 444–464 (YFMMAFSGIFLLNSWLLIEKL) threads the bilayer. Over 465–469 (KLSIE) the chain is Lumenal. The chain crosses the membrane as a helical span at residues 470 to 490 (GLILSNIINMVLRILYCGVFL). Residues 491-509 (NKFHRELFTDSSFFFNFKD) are Cytoplasmic-facing. The helical transmembrane segment at 510-530 (FKTVIIAGSTICLLDWWFIGY) threads the bilayer. Topologically, residues 531–532 (VK) are lumenal. The helical transmembrane segment at 533–553 (NLQQFVVNVLFAMGLLALILV) threads the bilayer. At 554–574 (KERQTIQSFINKRAVSNSKDV) the chain is on the cytoplasmic side.

Belongs to the RFT1 family.

It is found in the endoplasmic reticulum membrane. It functions in the pathway protein modification; protein glycosylation. Intramembrane glycolipid transporter that operates in the biosynthetic pathway of dolichol-linked oligosaccharides, the glycan precursors employed in protein asparagine (N)-glycosylation. The sequential addition of sugars to dolichol pyrophosphate produces dolichol-linked oligosaccharides containing fourteen sugars, including two GlcNAcs, nine mannoses and three glucoses. Once assembled, the oligosaccharide is transferred from the lipid to nascent proteins by oligosaccharyltransferases. The assembly of dolichol-linked oligosaccharides begins on the cytosolic side of the endoplasmic reticulum membrane and finishes in its lumen. RFT1 could mediate the translocation of the cytosolically oriented intermediate DolPP-GlcNAc2Man5, produced by ALG11, into the ER lumen where dolichol-linked oligosaccharides assembly continues. However, the intramembrane lipid transporter activity could not be confirmed in vitro. This is Man(5)GlcNAc(2)-PP-dolichol translocation protein RFT1 from Saccharomyces cerevisiae (strain ATCC 204508 / S288c) (Baker's yeast).